The primary structure comprises 204 residues: 8-oxoguanine DNA glycosylase/AP lyase (204 aa).

Residues Lys-129 and Asp-147 contribute to the active site.

It belongs to the type-2 OGG1 family.

The catalysed reaction is 2'-deoxyribonucleotide-(2'-deoxyribose 5'-phosphate)-2'-deoxyribonucleotide-DNA = a 3'-end 2'-deoxyribonucleotide-(2,3-dehydro-2,3-deoxyribose 5'-phosphate)-DNA + a 5'-end 5'-phospho-2'-deoxyribonucleoside-DNA + H(+). In terms of biological role, catalyzes the excision of an oxidatively damaged form of guanine (7,8-dihydro-8-oxoguanine = 8-oxoG) from DNA. Also cleaves the DNA backbone at apurinic/apyrimidinic sites (AP sites). Prefers oligomers containing 8-oxoG:C, 8-oxoG:T and 8-oxoG:G base pairs, and is less effective on oligomers containing 8-oxoG:A mispairs. This chain is 8-oxoguanine DNA glycosylase/AP lyase, found in Thermoplasma volcanium (strain ATCC 51530 / DSM 4299 / JCM 9571 / NBRC 15438 / GSS1).